Reading from the N-terminus, the 212-residue chain is 3-demethoxyubiquinol 3-hydroxylase (212 aa).

Residues 21–42 are disordered; the sequence is SRMSRPLPVPQESAVTEAAPEL. Glutamate 61, glutamate 91, histidine 94, glutamate 143, glutamate 175, and histidine 178 together coordinate Fe cation.

The protein belongs to the COQ7 family. Fe cation is required as a cofactor.

The protein resides in the cell membrane. The catalysed reaction is a 5-methoxy-2-methyl-3-(all-trans-polyprenyl)benzene-1,4-diol + AH2 + O2 = a 3-demethylubiquinol + A + H2O. The protein operates within cofactor biosynthesis; ubiquinone biosynthesis. Functionally, catalyzes the hydroxylation of 2-nonaprenyl-3-methyl-6-methoxy-1,4-benzoquinol during ubiquinone biosynthesis. In Paraburkholderia xenovorans (strain LB400), this protein is 3-demethoxyubiquinol 3-hydroxylase.